The primary structure comprises 515 residues: Putative pumilio homolog 8, chloroplastic (515 aa).

Positions 1–33 (MMRGEFGEASSLSRSPSSPLQTEPHPQSPKFYR) are disordered. Residues 1 to 70 (MMRGEFGEAS…LSSYFSNGLC (70 aa)) constitute a chloroplast transit peptide. Over residues 10–20 (SSLSRSPSSPL) the composition is skewed to low complexity. The PUM-HD domain maps to 174-515 (SGVGALFDHQ…RIFSRNLLKN (342 aa)). Pumilio repeat units lie at residues 198 to 233 (EFQGYVYFMAKDQHGCRFLQWIFEDGSALDALVIFS), 234 to 269 (EVIPHVVELMMDPFGNYLMQKLLDVCNEEQRTQIIL), 270 to 308 (MVTSEPGQLIRISLNAYGTRVVQRLVESIKTRKQISLVK), 310 to 345 (ALRPGFLNLIRDLNGNHVIQRCLQCLSTEDNEFIFE), 346 to 381 (DATKFCIDIATHRHGCCVLQKCIAYSSGLQREKLVT), 382 to 417 (EISRNSLFLAQDPYGNYAVQFVLELRDFSAIAAMLA), 418 to 456 (QLKGHYVELSMQKFSSHMVERCLTHCPESRPQIVRELIS), and 457 to 490 (VPHFDILIQDPYANFVIQAALAVTKGSLHATLVE).

The protein resides in the plastid. It localises to the chloroplast. It is found in the cytoplasm. In terms of biological role, sequence-specific RNA-binding protein that regulates translation and mRNA stability by binding the 3'-UTR of target mRNAs. This is Putative pumilio homolog 8, chloroplastic (APUM8) from Arabidopsis thaliana (Mouse-ear cress).